A 569-amino-acid polypeptide reads, in one-letter code: Protein AF-9 (569 aa).

The YEATS domain occupies 1–138 (MASSCAVQVK…EDFRRKLLKA (138 aa)). The interval 138–476 (AGGDPNRSIH…PPPPLLKTNN (339 aa)) is disordered. A compositionally biased stretch (low complexity) spans 149–190 (SSSSSSSSSSSSSSSSSSSSSSSSSSSSSSSSSSSSSSSSSS). Residues 202 to 265 (EHKEKPSKDS…PKPMSKEPKA (64 aa)) are compositionally biased toward basic and acidic residues. 2 positions are modified to phosphoserine: Ser289 and Ser295. The Nuclear localization signal signature appears at 296–301 (AKKRKK). The span at 304–314 (SEALFKSFSSA) shows a compositional bias: low complexity. Residues 323–350 (ADKKQIKDKSHVKMGKVKIESETSEKKK) show a composition bias toward basic and acidic residues. A Glycyl lysine isopeptide (Lys-Gly) (interchain with G-Cter in SUMO2) cross-link involves residue Lys340. The span at 358–369 (DIVDPNDSDVEE) shows a compositional bias: acidic residues. Positions 372–396 (SSKSDSEQPSPASSSSSSSSSFTPS) are enriched in low complexity. Phosphoserine occurs at positions 413 and 420. The segment covering 415–430 (DNEEESDEAEDNDNDS) has biased composition (acidic residues). Over residues 446 to 462 (VSLSDGSDSESSSASSP) the composition is skewed to low complexity. Phosphoserine is present on Ser484.

As to quaternary structure, component of the super elongation complex (SEC), at least composed of EAF1, EAF2, CDK9, MLLT3/AF9, AFF (AFF1 or AFF4), the P-TEFb complex and ELL (ELL, ELL2 or ELL3). Interacts with BCOR. Interacts with CBX8. Interacts with ALKBH4. As to expression, ubiquitously expressed. Strong expression in the spleen.

Its subcellular location is the nucleus. It localises to the chromosome. Functionally, chromatin reader component of the super elongation complex (SEC), a complex required to increase the catalytic rate of RNA polymerase II transcription by suppressing transient pausing by the polymerase at multiple sites along the DNA. Specifically recognizes and binds acylated histone H3, with a preference for histone H3 that is crotonylated. Crotonylation marks active promoters and enhancers and confers resistance to transcriptional repressors. Recognizes and binds histone H3 crotonylated at 'Lys-9' (H3K9cr), and with slightly lower affinity histone H3 crotonylated at 'Lys-18' (H3K18cr). Also recognizes and binds histone H3 acetylated and butyrylated at 'Lys-9' (H3K9ac and H3K9bu, respectively), but with lower affinity than crotonylated histone H3. In the SEC complex, MLLT3 is required to recruit the complex to crotonylated histones. Recruitment of the SEC complex to crotonylated histones promotes recruitment of DOT1L on active chromatin to deposit histone H3 'Lys-79' methylation (H3K79me). Plays a key role in hematopoietic stem cell (HSC) maintenance by preserving, rather than conferring, HSC stemness. Acts by binding to the transcription start site of active genes in HSCs and sustaining level of H3K79me2, probably by recruiting DOT1L. The polypeptide is Protein AF-9 (Mllt3) (Mus musculus (Mouse)).